The following is a 513-amino-acid chain: 2-isopropylmalate synthase (513 aa).

The Pyruvate carboxyltransferase domain maps to 4-268 (IKIFDTTLRD…ETGIRTELIY (265 aa)). Residues aspartate 13, histidine 203, histidine 205, and asparagine 239 each coordinate Mn(2+). The regulatory domain stretch occupies residues 392–513 (RLVHFHVHTG…GLLRKNGGVE (122 aa)).

This sequence belongs to the alpha-IPM synthase/homocitrate synthase family. LeuA type 1 subfamily. As to quaternary structure, homodimer. Mn(2+) is required as a cofactor.

It is found in the cytoplasm. It carries out the reaction 3-methyl-2-oxobutanoate + acetyl-CoA + H2O = (2S)-2-isopropylmalate + CoA + H(+). Its pathway is amino-acid biosynthesis; L-leucine biosynthesis; L-leucine from 3-methyl-2-oxobutanoate: step 1/4. Its function is as follows. Catalyzes the condensation of the acetyl group of acetyl-CoA with 3-methyl-2-oxobutanoate (2-ketoisovalerate) to form 3-carboxy-3-hydroxy-4-methylpentanoate (2-isopropylmalate). The sequence is that of 2-isopropylmalate synthase from Thermotoga neapolitana (strain ATCC 49049 / DSM 4359 / NBRC 107923 / NS-E).